A 664-amino-acid chain; its full sequence is Transketolase 1 (664 aa).

His26 contributes to the substrate binding site. Thiamine diphosphate-binding positions include His66 and 114–116 (GPL). Asp155 lines the Mg(2+) pocket. 2 residues coordinate thiamine diphosphate: Gly156 and Asn185. Mg(2+) contacts are provided by Asn185 and Ile187. Residues His260, Arg357, and Ser384 each coordinate substrate. His260 is a thiamine diphosphate binding site. The active-site Proton donor is the Glu411. Phe437 lines the thiamine diphosphate pocket. 3 residues coordinate substrate: His461, Asp469, and Arg520.

The protein belongs to the transketolase family. As to quaternary structure, homodimer. Mg(2+) serves as cofactor. The cofactor is Ca(2+). Requires Mn(2+) as cofactor. Co(2+) is required as a cofactor. It depends on thiamine diphosphate as a cofactor.

The catalysed reaction is D-sedoheptulose 7-phosphate + D-glyceraldehyde 3-phosphate = aldehydo-D-ribose 5-phosphate + D-xylulose 5-phosphate. Catalyzes the transfer of a two-carbon ketol group from a ketose donor to an aldose acceptor, via a covalent intermediate with the cofactor thiamine pyrophosphate. The polypeptide is Transketolase 1 (tkt1) (Aliivibrio fischeri (strain ATCC 700601 / ES114) (Vibrio fischeri)).